We begin with the raw amino-acid sequence, 571 residues long: Serine/threonine-protein kinase Nek7 (571 aa).

Positions 19–277 constitute a Protein kinase domain; that stretch reads YHVVEQVRRG…LRNPSLQPYL (259 aa). ATP contacts are provided by residues 25-33 and lysine 48; that span reads VRRGKSSSD. Catalysis depends on aspartate 144, which acts as the Proton acceptor. Disordered stretches follow at residues 298–321 and 338–363; these read SPKD…SREK and TETG…ETKR. Positions 312–321 are enriched in basic and acidic residues; sequence FGKERVSREK. Residues 342-351 are compositionally biased toward low complexity; that stretch reads SSSSSQPASS.

It belongs to the protein kinase superfamily. NEK Ser/Thr protein kinase family. NIMA subfamily.

It carries out the reaction L-seryl-[protein] + ATP = O-phospho-L-seryl-[protein] + ADP + H(+). The enzyme catalyses L-threonyl-[protein] + ATP = O-phospho-L-threonyl-[protein] + ADP + H(+). May be involved in plant development processes. This Arabidopsis thaliana (Mouse-ear cress) protein is Serine/threonine-protein kinase Nek7 (NEK7).